Here is an 809-residue protein sequence, read N- to C-terminus: Glycerol-3-phosphate acyltransferase (809 aa).

The HXXXXD motif signature appears at 309–314 (HRSHMD).

The protein belongs to the GPAT/DAPAT family.

It localises to the cell inner membrane. It catalyses the reaction sn-glycerol 3-phosphate + an acyl-CoA = a 1-acyl-sn-glycero-3-phosphate + CoA. The protein operates within phospholipid metabolism; CDP-diacylglycerol biosynthesis; CDP-diacylglycerol from sn-glycerol 3-phosphate: step 1/3. In Shewanella oneidensis (strain ATCC 700550 / JCM 31522 / CIP 106686 / LMG 19005 / NCIMB 14063 / MR-1), this protein is Glycerol-3-phosphate acyltransferase.